The sequence spans 355 residues: Replication-associated protein (355 aa).

Positions 11–114 (SHRNVNTFLT…PLAVFERGTF (104 aa)) constitute a CRESS-DNA virus Rep endonuclease domain. Residues 18–21 (FLTY) carry the RCR-1 motif. A divalent metal cation-binding residues include glutamate 52, histidine 60, and histidine 62. Residues 60 to 62 (HLH) carry the RCR-2 motif. Tyrosine 100 acts as the For DNA cleavage activity in catalysis. Positions 100–103 (YILK) match the RCR-3 motif. Residue glutamate 104 coordinates a divalent metal cation. The span at 119–128 (SSFQGNPSKG) shows a compositional bias: polar residues. Residues 119 to 138 (SSFQGNPSKGNSEKKPSKDE) form a disordered region. Basic and acidic residues predominate over residues 129–138 (NSEKKPSKDE). The segment at 175 to 187 (SANKLFPEIQEEF) is oligomerization. Residue 229–236 (GPTRTGKS) participates in ATP binding. Residues 252 to 270 (VDWSSYNEDAIYNIVDDIP) form a transactivation region. The Nuclear localization signal signature appears at 292–303 (KYGKKKKVQMKS).

This sequence belongs to the geminiviridae Rep protein family. Homooligomer. Rep binds to repeated DNA motifs (iterons). Forms the O-complex, which is a Rep-DNA complex involved in the initiation of RCR. Part of the C- and V-complexes which are RepA-Rep-DNA complexes involved in the c-sense and v-sense transcription. Mg(2+) is required as a cofactor. Requires Mn(2+) as cofactor.

The protein localises to the host nucleus. Functionally, essential for the replication of viral ssDNA. The closed circular ssDNA genome is first converted to a superhelical dsDNA. Rep binds a specific region at the genome origin of replication. It introduces an endonucleolytic nick within the conserved sequence 5'-TAATATTAC-3' in the intergenic region of the genome present in all geminiviruses, thereby initiating the rolling circle replication (RCR). Following cleavage, binds covalently to the 5'-phosphate of DNA as a tyrosyl ester. The cleavage gives rise to a free 3'-OH that serves as a primer for the cellular DNA polymerase. The polymerase synthesizes the (+) strand DNA by rolling circle mechanism. After one round of replication, a Rep-catalyzed nucleotidyl transfer reaction releases a circular single-stranded virus genome, thereby terminating the replication. Displays origin-specific DNA cleavage, nucleotidyl transferase, ATPase and helicase activities. Acts as an inhibitor of C-sense gene transcription. The chain is Replication-associated protein from Maize streak virus genotype B (isolate Tas) (MSV).